Here is a 211-residue protein sequence, read N- to C-terminus: ATP-dependent Clp protease proteolytic subunit 1 (211 aa).

The active-site Nucleophile is the serine 107. Histidine 132 is an active-site residue.

It belongs to the peptidase S14 family. Fourteen ClpP subunits assemble into 2 heptameric rings which stack back to back to give a disk-like structure with a central cavity, resembling the structure of eukaryotic proteasomes.

It is found in the cytoplasm. The enzyme catalyses Hydrolysis of proteins to small peptides in the presence of ATP and magnesium. alpha-casein is the usual test substrate. In the absence of ATP, only oligopeptides shorter than five residues are hydrolyzed (such as succinyl-Leu-Tyr-|-NHMec, and Leu-Tyr-Leu-|-Tyr-Trp, in which cleavage of the -Tyr-|-Leu- and -Tyr-|-Trp bonds also occurs).. Cleaves peptides in various proteins in a process that requires ATP hydrolysis. Has a chymotrypsin-like activity. Plays a major role in the degradation of misfolded proteins. The protein is ATP-dependent Clp protease proteolytic subunit 1 of Mycolicibacterium paratuberculosis (strain ATCC BAA-968 / K-10) (Mycobacterium paratuberculosis).